A 413-amino-acid polypeptide reads, in one-letter code: Peptidase T (413 aa).

His-82 is a Zn(2+) binding site. Asp-84 is an active-site residue. A Zn(2+)-binding site is contributed by Asp-145. Catalysis depends on Glu-179, which acts as the Proton acceptor. Residues Glu-180, Asp-202, and His-384 each contribute to the Zn(2+) site.

Belongs to the peptidase M20B family. Zn(2+) serves as cofactor.

It localises to the cytoplasm. The enzyme catalyses Release of the N-terminal residue from a tripeptide.. Cleaves the N-terminal amino acid of tripeptides. The polypeptide is Peptidase T (Latilactobacillus sakei subsp. sakei (strain 23K) (Lactobacillus sakei subsp. sakei)).